Consider the following 817-residue polypeptide: Protein kintoun (817 aa).

Disordered regions lie at residues 233-259, 385-404, 410-445, and 473-503; these read AEST…PRCS, AGAR…RKSC, AGTA…TPEN, and VQTS…KPLC. Over residues 386 to 401 the composition is skewed to basic and acidic residues; it reads GAREESADSSGADHGR. A phosphoserine mark is found at Ser622 and Ser631. Positions 653 to 692 are disordered; the sequence is ECSDPDGLQGKEKGVKEECPLSEKENTEHSTTSTADSNSS. A compositionally biased stretch (basic and acidic residues) spans 661-680; it reads QGKEKGVKEECPLSEKENTE. Positions 681 to 692 are enriched in polar residues; it reads HSTTSTADSNSS.

The protein belongs to the PIH1 family. Kintoun subfamily. Interacts with CFAP300. Interacts with DNAI2 and HSPA1A. Interacts with DNAAF4. Interacts with DNAAF6/PIH1D3.

It is found in the cytoplasm. It localises to the dynein axonemal particle. In terms of biological role, required for cytoplasmic pre-assembly of axonemal dyneins, thereby playing a central role in motility in cilia and flagella. Involved in pre-assembly of dynein arm complexes in the cytoplasm before intraflagellar transport loads them for the ciliary compartment. In Rattus norvegicus (Rat), this protein is Protein kintoun.